Consider the following 138-residue polypeptide: Protein FAM136A (138 aa).

The protein belongs to the FAM136 family.

The sequence is that of Protein FAM136A (fam136a) from Xenopus laevis (African clawed frog).